The sequence spans 564 residues: Adenine deaminase (564 aa).

The protein belongs to the metallo-dependent hydrolases superfamily. Adenine deaminase family. Mn(2+) serves as cofactor.

It carries out the reaction adenine + H2O + H(+) = hypoxanthine + NH4(+). This is Adenine deaminase from Deinococcus geothermalis (strain DSM 11300 / CIP 105573 / AG-3a).